The primary structure comprises 206 residues: Ribosomal RNA large subunit methyltransferase E (206 aa).

Positions 60, 62, 80, 96, and 121 each coordinate S-adenosyl-L-methionine. Lys161 functions as the Proton acceptor in the catalytic mechanism.

This sequence belongs to the class I-like SAM-binding methyltransferase superfamily. RNA methyltransferase RlmE family.

It is found in the cytoplasm. It carries out the reaction uridine(2552) in 23S rRNA + S-adenosyl-L-methionine = 2'-O-methyluridine(2552) in 23S rRNA + S-adenosyl-L-homocysteine + H(+). Functionally, specifically methylates the uridine in position 2552 of 23S rRNA at the 2'-O position of the ribose in the fully assembled 50S ribosomal subunit. The protein is Ribosomal RNA large subunit methyltransferase E of Francisella tularensis subsp. tularensis (strain FSC 198).